Reading from the N-terminus, the 173-residue chain is Shikimate kinase (173 aa).

Residue 10–15 (GSGKTT) coordinates ATP. A Mg(2+)-binding site is contributed by Thr14. Residues Asp32, Arg56, and Gly78 each contribute to the substrate site. Arg117 is an ATP binding site. Position 135 (Arg135) interacts with substrate.

The protein belongs to the shikimate kinase family. As to quaternary structure, monomer. The cofactor is Mg(2+).

The protein resides in the cytoplasm. The catalysed reaction is shikimate + ATP = 3-phosphoshikimate + ADP + H(+). It participates in metabolic intermediate biosynthesis; chorismate biosynthesis; chorismate from D-erythrose 4-phosphate and phosphoenolpyruvate: step 5/7. Functionally, catalyzes the specific phosphorylation of the 3-hydroxyl group of shikimic acid using ATP as a cosubstrate. The sequence is that of Shikimate kinase from Limosilactobacillus fermentum (strain NBRC 3956 / LMG 18251) (Lactobacillus fermentum).